Reading from the N-terminus, the 122-residue chain is Large ribosomal subunit protein uL18 (122 aa).

Belongs to the universal ribosomal protein uL18 family. Part of the 50S ribosomal subunit; part of the 5S rRNA/L5/L18/L25 subcomplex. Contacts the 5S and 23S rRNAs.

In terms of biological role, this is one of the proteins that bind and probably mediate the attachment of the 5S RNA into the large ribosomal subunit, where it forms part of the central protuberance. This Agathobacter rectalis (strain ATCC 33656 / DSM 3377 / JCM 17463 / KCTC 5835 / VPI 0990) (Eubacterium rectale) protein is Large ribosomal subunit protein uL18.